A 416-amino-acid chain; its full sequence is Putative competence-damage inducible protein (416 aa).

It belongs to the CinA family.

The polypeptide is Putative competence-damage inducible protein (Bacillus pumilus (strain SAFR-032)).